The sequence spans 323 residues: MVKATKAEKKIAYDTKLCQLIDEYTQILVVAADNVGSTQLQNIRKGLRGDSVVLMGKNTMMKRSVRIHSENSGNTAILNLLPLLQGNVGLIFTKGDLKEVSEEVAKYKVGAPARVGLVAPIDVVVQPGNTGLDPSQTSFFQVLNIPTKINKGTVEIITPVELIKQGDKVGSSEAALLAKLGIRPFSYGLVVQSVYDNGSVFSPEVLDLTEDQLVEKFASGISMVTSLALAVSYPTLAAAPHMFINAYKNALAIAVATDYTFPQAEKVKEFLKDPSKFVVAAAAVSADAGGGSAQAGAAAKVEEKKEESDEEDYEGGFGLFDEE.

A disordered region spans residues Asp287–Glu323. Position 308 is a phosphoserine (Ser308). A compositionally biased stretch (acidic residues) spans Ser308 to Glu323. Residue Tyr313 is modified to Phosphotyrosine.

It belongs to the universal ribosomal protein uL10 family. P0 forms a pentameric complex by interaction with dimers of P1 and P2.

Ribosomal protein P0 is the functional equivalent of E.coli protein L10. This Arabidopsis thaliana (Mouse-ear cress) protein is Large ribosomal subunit protein uL10x (RPP0C).